The sequence spans 98 residues: Large ribosomal subunit protein bL21 (98 aa).

Belongs to the bacterial ribosomal protein bL21 family. As to quaternary structure, part of the 50S ribosomal subunit. Contacts protein L20.

Its function is as follows. This protein binds to 23S rRNA in the presence of protein L20. In Chloroherpeton thalassium (strain ATCC 35110 / GB-78), this protein is Large ribosomal subunit protein bL21.